A 600-amino-acid chain; its full sequence is Elongation factor 4 (600 aa).

Residues 5-187 enclose the tr-type G domain; sequence KYIRNFSIIA…AIVNKLPPPK (183 aa). Residues 17-22 and 134-137 each bind GTP; these read DHGKST and NKLD.

Belongs to the TRAFAC class translation factor GTPase superfamily. Classic translation factor GTPase family. LepA subfamily.

Its subcellular location is the cell inner membrane. It catalyses the reaction GTP + H2O = GDP + phosphate + H(+). In terms of biological role, required for accurate and efficient protein synthesis under certain stress conditions. May act as a fidelity factor of the translation reaction, by catalyzing a one-codon backward translocation of tRNAs on improperly translocated ribosomes. Back-translocation proceeds from a post-translocation (POST) complex to a pre-translocation (PRE) complex, thus giving elongation factor G a second chance to translocate the tRNAs correctly. Binds to ribosomes in a GTP-dependent manner. This chain is Elongation factor 4, found in Rickettsia conorii (strain ATCC VR-613 / Malish 7).